Reading from the N-terminus, the 434-residue chain is Prenyltransferase fogH (434 aa).

Glu-86 lines the L-tryptophan pocket. Residues Arg-101, Arg-248, Lys-250, Tyr-252, and Tyr-346 each coordinate substrate.

The protein belongs to the tryptophan dimethylallyltransferase family.

It participates in secondary metabolite biosynthesis. In terms of biological role, prenyltransferase; part of the gene cluster that mediates the biosynthesis of flavoglaucin and congeners (including aspergin, dihydroauroglaucin and auroglaucin), prenylated salicylaldehyde derivatives carrying a saturated or an unsaturated C-7 side chain. The PKS fogA releases the carboxylic acid (8E,10E,12E)-3,5,7-trihydroxytetradeca-8,10,12-trienoic acid as its product, as well as derivatives with one and two double bonds. FogA is indeed able to reduce the initial triketide, thus being at least partially responsible for the differently saturated heptyl side chains of flavoglaucin congeners. The oxidoreductases fogB, fogC and fogD modify the nascent polyketide in fogA-bound form and, together, fogA, fogB, fogC and fogD are necessary for the formation of the aromatic core and the cyclized PKS products are released as salicyl alcohols. In particular, fogB is responsible for oxidation of a hydroxyl group or reduction of remaining double bond(s) at the C-7 residue whereas fogD is probably involved in the reductive release of the modified PKS products. The cytochrome P450 monooxygenase fogE is then responsible for the hydroxylation at C-3 of the benzene ring. The fogE products are substrates of the prenyltransferase fogH and the prenylated benzyl alcohols are subsequently oxidized by the fogF to produce the final aryl aldehydes flavoglaucin and congeners. The short-chain dehydrogenase fogG does not seem to be involved in the biosynthesis of the prenylated salicylaldehyde derivatives. This chain is Prenyltransferase fogH, found in Aspergillus ruber (strain CBS 135680).